The following is an 86-amino-acid chain: Small ribosomal subunit protein uS17 (86 aa).

Belongs to the universal ribosomal protein uS17 family. Part of the 30S ribosomal subunit.

Its function is as follows. One of the primary rRNA binding proteins, it binds specifically to the 5'-end of 16S ribosomal RNA. In Streptococcus thermophilus (strain CNRZ 1066), this protein is Small ribosomal subunit protein uS17.